Consider the following 84-residue polypeptide: Dolichol phosphate-mannose biosynthesis regulatory protein (84 aa).

The next 2 membrane-spanning stretches (helical) occupy residues 11–31 and 49–69; these read LGLVALSLIIFTYYTAWVILL and YAIAIPLAAGHLLLLFVGIFI.

It belongs to the DPM2 family. As to quaternary structure, component of the dolichol-phosphate mannose (DPM) synthase complex composed of DPM1, DPM2 and DPM3; in the complex interacts directly with DPM3. Component of the glycosylphosphatidylinositol-N-acetylglucosaminyltransferase (GPI-GnT) complex composed at least by PIGA, PIGC, PIGH, PIGP, PIGQ, PIGY and DPM2. Interacts with PIGA, PIGC and PIGQ.

It localises to the endoplasmic reticulum membrane. The protein operates within protein modification; protein glycosylation. In terms of biological role, regulates the biosynthesis of dolichol phosphate-mannose. Regulatory subunit of the dolichol-phosphate mannose (DPM) synthase complex; essential for the ER localization and stable expression of DPM1. Part of the glycosylphosphatidylinositol-N-acetylglucosaminyltransferase (GPI-GnT) complex that catalyzes the transfer of N-acetylglucosamine from UDP-N-acetylglucosamine to phosphatidylinositol and participates in the first step of GPI biosynthesis. May act by regulating the GPI-GNT complex. The chain is Dolichol phosphate-mannose biosynthesis regulatory protein from Bos taurus (Bovine).